Consider the following 146-residue polypeptide: uncharacterized protein (146 aa).

This is an uncharacterized protein from Sinorhizobium fredii (strain NBRC 101917 / NGR234).